The chain runs to 275 residues: Light-independent protochlorophyllide reductase iron-sulfur ATP-binding protein (275 aa).

ATP is bound by residues 12 to 17 (GIGKST) and Lys41. Mg(2+) is bound at residue Ser16. The [4Fe-4S] cluster site is built by Cys97 and Cys131. 182–183 (NR) is a binding site for ATP.

The protein belongs to the NifH/BchL/ChlL family. Homodimer. Protochlorophyllide reductase is composed of three subunits; BchL, BchN and BchB. [4Fe-4S] cluster serves as cofactor.

It carries out the reaction chlorophyllide a + oxidized 2[4Fe-4S]-[ferredoxin] + 2 ADP + 2 phosphate = protochlorophyllide a + reduced 2[4Fe-4S]-[ferredoxin] + 2 ATP + 2 H2O. It functions in the pathway porphyrin-containing compound metabolism; bacteriochlorophyll biosynthesis (light-independent). In terms of biological role, component of the dark-operative protochlorophyllide reductase (DPOR) that uses Mg-ATP and reduced ferredoxin to reduce ring D of protochlorophyllide (Pchlide) to form chlorophyllide a (Chlide). This reaction is light-independent. The L component serves as a unique electron donor to the NB-component of the complex, and binds Mg-ATP. The polypeptide is Light-independent protochlorophyllide reductase iron-sulfur ATP-binding protein (Chlorobium phaeobacteroides (strain DSM 266 / SMG 266 / 2430)).